The primary structure comprises 294 residues: ATP phosphoribosyltransferase (294 aa).

It belongs to the ATP phosphoribosyltransferase family. Long subfamily. The cofactor is Mg(2+).

It localises to the cytoplasm. The catalysed reaction is 1-(5-phospho-beta-D-ribosyl)-ATP + diphosphate = 5-phospho-alpha-D-ribose 1-diphosphate + ATP. The protein operates within amino-acid biosynthesis; L-histidine biosynthesis; L-histidine from 5-phospho-alpha-D-ribose 1-diphosphate: step 1/9. With respect to regulation, feedback inhibited by histidine. Its function is as follows. Catalyzes the condensation of ATP and 5-phosphoribose 1-diphosphate to form N'-(5'-phosphoribosyl)-ATP (PR-ATP). Has a crucial role in the pathway because the rate of histidine biosynthesis seems to be controlled primarily by regulation of HisG enzymatic activity. This Pelodictyon phaeoclathratiforme (strain DSM 5477 / BU-1) protein is ATP phosphoribosyltransferase.